A 658-amino-acid chain; its full sequence is ATP-dependent DNA helicase Rep (658 aa).

The region spanning 1–280 (MSLNFNQKNA…IKMEQNYRSY (280 aa)) is the UvrD-like helicase ATP-binding domain. ATP-binding positions include 22–29 (AGAGSGKT) and R278. The UvrD-like helicase C-terminal domain occupies 281 to 564 (GRILKAANKL…QLMTLHSSKG (284 aa)).

It belongs to the helicase family. UvrD subfamily. Homodimer.

The enzyme catalyses Couples ATP hydrolysis with the unwinding of duplex DNA by translocating in the 3'-5' direction.. It carries out the reaction ATP + H2O = ADP + phosphate + H(+). Functionally, rep helicase is a single-stranded DNA-dependent ATPase involved in DNA replication; it can initiate unwinding at a nick in the DNA. It binds to the single-stranded DNA and acts in a progressive fashion along the DNA in the 3' to 5' direction. This Buchnera aphidicola subsp. Schizaphis graminum (strain Sg) protein is ATP-dependent DNA helicase Rep.